Reading from the N-terminus, the 346-residue chain is Annexin A1 (346 aa).

Alanine 2 carries the post-translational modification N-acetylalanine. Serine 5 carries the post-translational modification Phosphoserine; by TRPM7. Glutamine 19 is covalently cross-linked (Isoglutamyl lysine isopeptide (Gln-Lys) (interchain with K-?)). Tyrosine 21 is subject to Phosphotyrosine. Position 27 is a phosphoserine; by PKC (serine 27). Residues serine 34 and serine 37 each carry the phosphoserine modification. 4 Annexin repeats span residues 42–113 (FNVS…AMLK), 114–185 (TPAQ…ALAK), 197–269 (DLAD…TIVK), and 273–344 (STPA…ALCG). Lysine 58 bears the N6-acetyllysine mark. Ca(2+)-binding residues include glycine 59, valine 60, glutamate 62, arginine 97, leucine 100, glutamate 105, methionine 127, glycine 129, glycine 131, threonine 132, and glutamate 134. Threonine 136 carries the post-translational modification Phosphothreonine. Ca(2+) contacts are provided by aspartate 171, glycine 210, and arginine 213. Lysine 214 is covalently cross-linked (Glycyl lysine isopeptide (Lys-Gly) (interchain with G-Cter in SUMO1); alternate). Lysine 214 is covalently cross-linked (Glycyl lysine isopeptide (Lys-Gly) (interchain with G-Cter in SUMO2); alternate). The Ca(2+) site is built by glycine 215, aspartate 253, glutamate 255, and leucine 256. Lysine 257 is covalently cross-linked (Glycyl lysine isopeptide (Lys-Gly) (interchain with G-Cter in SUMO1)). Ca(2+) is bound by residues glutamate 261, methionine 286, glycine 288, and glycine 290. At lysine 312 the chain carries N6-acetyllysine. Residues cysteine 324 and cysteine 343 are joined by a disulfide bond. Leucine 328, glutamate 330, and threonine 331 together coordinate Ca(2+). Lysine 332 participates in a covalent cross-link: Glycyl lysine isopeptide (Lys-Gly) (interchain with G-Cter in SUMO1). Glutamate 336 serves as a coordination point for Ca(2+).

The protein belongs to the annexin family. In terms of assembly, homodimer; non-covalently linked. Homodimer; linked by transglutamylation. Homodimers linked by transglutamylation are observed in placenta, but not in other tissues. Interacts with S100A11. Heterotetramer, formed by two molecules each of S100A11 and ANXA1. Interacts with DYSF. Interacts with EGFR. Post-translationally, phosphorylated by protein kinase C, EGFR and TRPM7. Phosphorylated in response to EGF treatment. Sumoylated. In terms of processing, proteolytically cleaved by cathepsin CTSG to release the active N-terminal peptide Ac2-26. In terms of tissue distribution, detected in lung. Detected at the apical membrane of airway epithelial cells. Detected in intestinal epithelial cells. Detected in skeletal muscle. Detected in prostate. Detected in thymus (at protein level). Detected in stomach, lung, spleen, ovary and uterus, and at lower levels in kidney, thymus and heart.

It localises to the nucleus. The protein resides in the cytoplasm. The protein localises to the cell projection. Its subcellular location is the cilium. It is found in the basolateral cell membrane. It localises to the lateral cell membrane. The protein resides in the cell membrane. The protein localises to the apical cell membrane. Its subcellular location is the membrane. It is found in the early endosome. It localises to the cytoplasmic vesicle membrane. The protein resides in the endosome membrane. The protein localises to the secreted. Its subcellular location is the extracellular space. It is found in the extracellular exosome. It localises to the cytoplasmic vesicle. The protein resides in the secretory vesicle lumen. The protein localises to the phagocytic cup. Its function is as follows. Plays important roles in the innate immune response as effector of glucocorticoid-mediated responses and regulator of the inflammatory process. Has anti-inflammatory activity. Plays a role in glucocorticoid-mediated down-regulation of the early phase of the inflammatory response. Contributes to the adaptive immune response by enhancing signaling cascades that are triggered by T-cell activation, regulates differentiation and proliferation of activated T-cells. Promotes the differentiation of T-cells into Th1 cells and negatively regulates differentiation into Th2 cells. Has no effect on unstimulated T-cells. Negatively regulates hormone exocytosis via activation of the formyl peptide receptors and reorganization of the actin cytoskeleton. Has high affinity for Ca(2+) and can bind up to eight Ca(2+) ions. Displays Ca(2+)-dependent binding to phospholipid membranes. Plays a role in the formation of phagocytic cups and phagosomes. Plays a role in phagocytosis by mediating the Ca(2+)-dependent interaction between phagosomes and the actin cytoskeleton. Functionally, functions at least in part by activating the formyl peptide receptors and downstream signaling cascades. Promotes chemotaxis of granulocytes and monocytes via activation of the formyl peptide receptors. Promotes rearrangement of the actin cytoskeleton, cell polarization and cell migration. Promotes resolution of inflammation and wound healing. Acts via neutrophil N-formyl peptide receptors to enhance the release of CXCL2. The sequence is that of Annexin A1 (Anxa1) from Mus musculus (Mouse).